We begin with the raw amino-acid sequence, 147 residues long: UPF0275 protein PM0504 (147 aa).

The protein belongs to the UPF0275 family.

The sequence is that of UPF0275 protein PM0504 from Pasteurella multocida (strain Pm70).